A 1086-amino-acid polypeptide reads, in one-letter code: Lysine-specific demethylase 4B (1086 aa).

Residues 15–57 (IMTFRPTMDEFRDFNRYVAYIESQGAHRAGLAKIIPPKEWKPR) form the JmjN domain. Tyr133 is a binding site for 2-oxoglutarate. The region spanning 146-309 (VAQWNIGNLR…YGKVATQCTC (164 aa)) is the JmjC domain. Fe cation-binding residues include His189 and Glu191. 2-oxoglutarate-binding residues include Asn199 and Lys207. Zn(2+) is bound by residues Cys235 and His241. Lys242 serves as a coordination point for 2-oxoglutarate. His277 is a Fe cation binding site. Zn(2+) contacts are provided by Cys307 and Cys309. Residues 379 to 395 (SRPWRKAEEERRREPTR) show a composition bias toward basic and acidic residues. Disordered regions lie at residues 379 to 536 (SRPW…PPGA) and 575 to 624 (PMEL…LSVV). The segment covering 401–410 (SHRRRSQPKK) has biased composition (basic residues). Positions 441-450 (MPEDEEEEEL) are enriched in acidic residues. Basic and acidic residues predominate over residues 456–467 (HEAEGVEEDGRG). Basic residues predominate over residues 468-480 (KPRPTKARNKKKT). Residues 512–522 (GPAMGPMAAEG) show a composition bias toward low complexity. Residues 585-597 (QAQAGDSQGTTPF) show a composition bias toward polar residues. Lys599 bears the N6-acetyllysine mark. A PHD-type 1 zinc finger spans residues 719–777 (MCFTSSGENTEPLPANSYVGEDGTSPLISCAHCCLQVHASCYGVRPELAKEGWTCSRCA). A C2HC pre-PHD-type zinc finger spans residues 782-815 (TAECCLCNLRGGALQRTTEHRWIHVICAIAVPEV). The PHD-type 2 zinc finger occupies 838–895 (LKCIYCRKRMKRVSGACIQCSYEHCSTSFHVTCAHAAGVLMEPDDWPYVVSITCLKHR). Tudor domains are found at residues 905–962 (RTVS…CLRL) and 963–1019 (GPPP…EELP). Residues 1024 to 1043 (SRLSLSTGTPQEPSFSGDDV) form a disordered region. Over residues 1026–1037 (LSLSTGTPQEPS) the composition is skewed to polar residues.

The protein belongs to the JHDM3 histone demethylase family. The cofactor is Fe(2+).

Its subcellular location is the nucleus. The catalysed reaction is N(6),N(6),N(6)-trimethyl-L-lysyl(9)-[histone H3] + 2 2-oxoglutarate + 2 O2 = N(6)-methyl-L-lysyl(9)-[histone H3] + 2 formaldehyde + 2 succinate + 2 CO2. In terms of biological role, histone demethylase that specifically demethylates 'Lys-9' of histone H3, thereby playing a role in histone code. Does not demethylate histone H3 'Lys-4', H3 'Lys-27', H3 'Lys-36' nor H4 'Lys-20'. Only able to demethylate trimethylated H3 'Lys-9', with a weaker activity than KDM4A, KDM4C and KDM4D. Demethylation of Lys residue generates formaldehyde and succinate. Plays a critical role in the development of the central nervous system (CNS). The polypeptide is Lysine-specific demethylase 4B (Kdm4b) (Mus musculus (Mouse)).